A 129-amino-acid chain; its full sequence is Large ribosomal subunit protein bL20 (129 aa).

The protein belongs to the bacterial ribosomal protein bL20 family.

In terms of biological role, binds directly to 23S ribosomal RNA and is necessary for the in vitro assembly process of the 50S ribosomal subunit. It is not involved in the protein synthesizing functions of that subunit. This Mycolicibacterium smegmatis (strain ATCC 700084 / mc(2)155) (Mycobacterium smegmatis) protein is Large ribosomal subunit protein bL20.